The chain runs to 60 residues: Potassium channel toxin alpha-KTx 12.7 (60 aa).

Residues 1–22 (MSNMPVLIITLLLFSMYISTAA) form the signal peptide. 3 disulfide bridges follow: Cys30–Cys51, Cys36–Cys56, and Cys40–Cys58.

The protein belongs to the short scorpion toxin superfamily. Potassium channel inhibitor family. Alpha-KTx 12 subfamily. Expressed by the venom gland.

It is found in the secreted. Inhibits voltage-gated potassium channels. This Lychas mucronatus (Chinese swimming scorpion) protein is Potassium channel toxin alpha-KTx 12.7.